A 205-amino-acid chain; its full sequence is MSVFALGMILFAYLCGSLSSAILVCRLFKLPDPRHHGSGNPGATNVLRIGGRGVAATVLVFDVLKGMLPVWLAYHLGATPFYLGLTAIAACLGHIYPVFFHFKGGKGVATALGAIAPIGWDLTGLMTGTWLLTVLLSGYSSLGAIVSALIAPFYVWWFKPQFTFPVAMLSCLILLRHHDNIQRLWRGQETRVWKKKDRRKGPGKT.

The next 5 membrane-spanning stretches (helical) occupy residues 3-23 (VFAL…SAIL), 53-73 (GVAA…VWLA), 80-100 (PFYL…PVFF), 112-132 (LGAI…TWLL), and 138-158 (GYSS…VWWF).

This sequence belongs to the PlsY family. In terms of assembly, probably interacts with PlsX.

It localises to the cell inner membrane. The enzyme catalyses an acyl phosphate + sn-glycerol 3-phosphate = a 1-acyl-sn-glycero-3-phosphate + phosphate. Its pathway is lipid metabolism; phospholipid metabolism. Its function is as follows. Catalyzes the transfer of an acyl group from acyl-phosphate (acyl-PO(4)) to glycerol-3-phosphate (G3P) to form lysophosphatidic acid (LPA). This enzyme utilizes acyl-phosphate as fatty acyl donor, but not acyl-CoA or acyl-ACP. This Erwinia tasmaniensis (strain DSM 17950 / CFBP 7177 / CIP 109463 / NCPPB 4357 / Et1/99) protein is Glycerol-3-phosphate acyltransferase.